A 330-amino-acid polypeptide reads, in one-letter code: Beta-ketoacyl-[acyl-carrier-protein] synthase III (330 aa).

Residues Cys116 and His257 contribute to the active site. The segment at 258–262 (QANQR) is ACP-binding. Asn287 is a catalytic residue.

Belongs to the thiolase-like superfamily. FabH family. As to quaternary structure, homodimer.

It localises to the cytoplasm. It catalyses the reaction malonyl-[ACP] + acetyl-CoA + H(+) = 3-oxobutanoyl-[ACP] + CO2 + CoA. It functions in the pathway lipid metabolism; fatty acid biosynthesis. Functionally, catalyzes the condensation reaction of fatty acid synthesis by the addition to an acyl acceptor of two carbons from malonyl-ACP. Catalyzes the first condensation reaction which initiates fatty acid synthesis and may therefore play a role in governing the total rate of fatty acid production. Possesses both acetoacetyl-ACP synthase and acetyl transacylase activities. Its substrate specificity determines the biosynthesis of branched-chain and/or straight-chain of fatty acids. In Synechocystis sp. (strain ATCC 27184 / PCC 6803 / Kazusa), this protein is Beta-ketoacyl-[acyl-carrier-protein] synthase III.